The following is a 481-amino-acid chain: Proline--tRNA ligase (481 aa).

It belongs to the class-II aminoacyl-tRNA synthetase family. ProS type 3 subfamily. As to quaternary structure, homodimer.

Its subcellular location is the cytoplasm. The enzyme catalyses tRNA(Pro) + L-proline + ATP = L-prolyl-tRNA(Pro) + AMP + diphosphate. Its function is as follows. Catalyzes the attachment of proline to tRNA(Pro) in a two-step reaction: proline is first activated by ATP to form Pro-AMP and then transferred to the acceptor end of tRNA(Pro). This chain is Proline--tRNA ligase, found in Chlorobium phaeovibrioides (strain DSM 265 / 1930) (Prosthecochloris vibrioformis (strain DSM 265)).